We begin with the raw amino-acid sequence, 351 residues long: MAAAAPATAAVRRMKLGSQGLEVSAQGLGCMGMSAFYGPPKPEPDMVALIHHAVAAGVTLLDTSDIYGPHTNELLLGKALQGGVRDKVELATKFGIAFEDGKRGVRGDPAYVRAACEGSLRRLGVDSIDLYYQHRVDKKVPIEVTIGELKKLVEEGKIKYIGLSEASASTIRRAHAVHPITAVQLEWSLWSRDVEEDIIPTCRELGIGIVAYSPLGRGFFSAGAKLVESLSDQDFRKHIPRFQQENLEKNAEIFERVNAMAARKGCTPSQLALAWVHHQGSDVCPIPGTTKIENLNQNIGALSVKLTPEEMAELESYASTDDVRGDRYPQAMANTTWQNSETPPLSSWKAQ.

Tyr67 functions as the Proton donor in the catalytic mechanism. Substrate is bound at residue His134. Residue 213-223 coordinates NADP(+); the sequence is SPLGRGFFSAG. A disordered region spans residues 317–351; that stretch reads YASTDDVRGDRYPQAMANTTWQNSETPPLSSWKAQ. Residues 332–351 show a composition bias toward polar residues; the sequence is MANTTWQNSETPPLSSWKAQ.

Belongs to the aldo/keto reductase family.

The sequence is that of Probable aldo-keto reductase 2 from Oryza sativa subsp. indica (Rice).